Reading from the N-terminus, the 351-residue chain is Cell shape-determining protein MreB (351 aa).

Residues 20-22 (TAN), 169-171 (GGT), 217-220 (ERIK), and 299-302 (GGAL) each bind ATP.

This sequence belongs to the FtsA/MreB family. As to quaternary structure, forms polymers.

It localises to the cytoplasm. Forms membrane-associated dynamic filaments that are essential for cell shape determination. Acts by regulating cell wall synthesis and cell elongation, and thus cell shape. A feedback loop between cell geometry and MreB localization may maintain elongated cell shape by targeting cell wall growth to regions of negative cell wall curvature. The protein is Cell shape-determining protein MreB of Pasteurella multocida (strain Pm70).